A 554-amino-acid polypeptide reads, in one-letter code: Estrogen receptor beta (554 aa).

Residues 25 to 173 (TEIKNSPAGV…NPGSKKDAHF (149 aa)) form a modulating region. 2 consecutive NR C4-type zinc fingers follow at residues 174–194 (CAVC…CEGC) and 210–234 (CPAT…LRKC). The segment at residues 174-239 (CAVCSDYASG…RLRKCYEVGM (66 aa)) is a DNA-binding region (nuclear receptor). Residues 289-521 (SPEQFVLTLL…DLLLEMLNAH (233 aa)) form the NR LBD domain. The tract at residues 529–554 (PLATHPEFGPLEQMEPGESLRKGEPQ) is disordered.

Belongs to the nuclear hormone receptor family. NR3 subfamily. In terms of assembly, binds DNA as a homodimer. Can form a heterodimer with ER-alpha. In terms of tissue distribution, brain, pituitary, skeletal muscle, liver, adrenal, kidney, intestine and ovary.

It localises to the nucleus. In terms of biological role, binds estrogens with an affinity similar to that of ER-alpha, and activates expression of reporter genes containing estrogen response elements (ERE) in an estrogen-dependent manner. Locally synthesized estrogens may act via ER beta, in addition to ER alpha, to mediate seasonal or developmental effects on nearby song nuclei. The protein is Estrogen receptor beta (ESR2) of Sturnus vulgaris (Starling).